Consider the following 351-residue polypeptide: DNA polymerase IV (351 aa).

One can recognise a UmuC domain in the interval 4–185 (IIHVDMDCFY…LPLGKIPGVG (182 aa)). D8 and D103 together coordinate Mg(2+). Residue E104 is part of the active site.

The protein belongs to the DNA polymerase type-Y family. In terms of assembly, monomer. It depends on Mg(2+) as a cofactor.

The protein localises to the cytoplasm. The enzyme catalyses DNA(n) + a 2'-deoxyribonucleoside 5'-triphosphate = DNA(n+1) + diphosphate. Its function is as follows. Poorly processive, error-prone DNA polymerase involved in untargeted mutagenesis. Copies undamaged DNA at stalled replication forks, which arise in vivo from mismatched or misaligned primer ends. These misaligned primers can be extended by PolIV. Exhibits no 3'-5' exonuclease (proofreading) activity. May be involved in translesional synthesis, in conjunction with the beta clamp from PolIII. This chain is DNA polymerase IV, found in Citrobacter koseri (strain ATCC BAA-895 / CDC 4225-83 / SGSC4696).